Reading from the N-terminus, the 134-residue chain is Large ribosomal subunit protein uL16c (134 aa).

The interval 1–22 is disordered; sequence MLSPKRTRFRKQHRGRMKGISH.

It belongs to the universal ribosomal protein uL16 family. As to quaternary structure, part of the 50S ribosomal subunit.

The protein resides in the plastid. It is found in the chloroplast. This is Large ribosomal subunit protein uL16c from Nicotiana tomentosiformis (Tobacco).